Reading from the N-terminus, the 143-residue chain is Peptide methionine sulfoxide reductase MsrB (143 aa).

The region spanning 16-139 is the MsrB domain; it reads DAELRRRLTP…NSAALNFEAK (124 aa). Residues C55, C58, C104, and C107 each contribute to the Zn(2+) site. C128 (nucleophile) is an active-site residue.

The protein belongs to the MsrB Met sulfoxide reductase family. Zn(2+) serves as cofactor.

The enzyme catalyses L-methionyl-[protein] + [thioredoxin]-disulfide + H2O = L-methionyl-(R)-S-oxide-[protein] + [thioredoxin]-dithiol. The sequence is that of Peptide methionine sulfoxide reductase MsrB from Burkholderia thailandensis (strain ATCC 700388 / DSM 13276 / CCUG 48851 / CIP 106301 / E264).